The primary structure comprises 406 residues: Proteasome-activating nucleotidase 1 (406 aa).

The segment covering 1–12 has biased composition (acidic residues); it reads MTDTVEDVELPY. Residues 1-20 are disordered; sequence MTDTVEDVELPYDDSASQQD. The stretch at 12–70 forms a coiled coil; sequence YDDSASQQDKLEALEEQLSTLEEENEEMRDRLLDANAENNKYQQKLERLSHENKKLKQS. ATP-binding positions include 192–197 and histidine 331; that span reads GTGKTL. Residues 385–406 form a disordered region; it reads AREKLDQDSEPAAATDVSRTFA. Positions 404–406 are docks into pockets in the proteasome alpha-ring to cause gate opening; the sequence is TFA.

The protein belongs to the AAA ATPase family. In terms of assembly, homohexamer. The hexameric complex has a two-ring architecture resembling a top hat that caps the 20S proteasome core at one or both ends. Upon ATP-binding, the C-terminus of PAN interacts with the alpha-rings of the proteasome core by binding to the intersubunit pockets.

The protein localises to the cytoplasm. Functionally, ATPase which is responsible for recognizing, binding, unfolding and translocation of substrate proteins into the archaeal 20S proteasome core particle. Is essential for opening the gate of the 20S proteasome via an interaction with its C-terminus, thereby allowing substrate entry and access to the site of proteolysis. Thus, the C-termini of the proteasomal ATPase function like a 'key in a lock' to induce gate opening and therefore regulate proteolysis. Unfolding activity requires energy from ATP hydrolysis, whereas ATP binding alone promotes ATPase-20S proteasome association which triggers gate opening, and supports translocation of unfolded substrates. The polypeptide is Proteasome-activating nucleotidase 1 (Halobacterium salinarum (strain ATCC 700922 / JCM 11081 / NRC-1) (Halobacterium halobium)).